A 175-amino-acid chain; its full sequence is Mitochondrial inner membrane protease subunit 2 (175 aa).

Residues 19–37 form a helical membrane-spanning segment; the sequence is FFVAVPVAVTFLDRVACVA. Catalysis depends on residues Ser43 and Lys91.

The protein belongs to the peptidase S26 family. IMP2 subfamily. Heterodimer of 2 subunits, IMMPL1 and IMMPL2. Expressed in all tissues tested except adult liver and lung.

The protein localises to the mitochondrion inner membrane. Catalyzes the removal of transit peptides required for the targeting of proteins from the mitochondrial matrix, across the inner membrane, into the inter-membrane space. Known to process the nuclear encoded protein DIABLO. This chain is Mitochondrial inner membrane protease subunit 2 (IMMP2L), found in Homo sapiens (Human).